Reading from the N-terminus, the 372-residue chain is MGRKKISIAPITDDRSRSVTFVKRKQGLYKKAYELAVLADCEVAVTVIDRKGRLHVFCSSDYQRTLQQLNTLSIYELKNRSHFSSSPVEESSTVSPETTTGSFTPLNNKHLKSQDQPLSDSQLDTGDSPATSETTVQDYNPQVQSYCRPEPLSSNHVRSCPPFPPTQHHHPHTRPPHHPPHPHFHNNNYPPPYCFQSPVSPGATVPLQHHSPYPSDNGFPGHRRQTHFAPYYYPQRATSPSLKQVPTYLGTHVLQQDQSTYDQKVLMPPASYLSSPNQYTLKNVSPGNPACPPFLYEHPNPQLTPEMFDVKQGSPIPPTAYSGSSCETSQHTIANTPFLAYDRSPSLTNQEAESSFQDVASISPHSLSDVKY.

The MADS-box domain maps to 1 to 61 (MGRKKISIAP…GRLHVFCSSD (61 aa)). Residues 81 to 187 (SHFSSSPVEE…HPPHPHFHNN (107 aa)) are disordered. Low complexity predominate over residues 84–100 (SSSPVEESSTVSPETTT). Over residues 114–145 (QDQPLSDSQLDTGDSPATSETTVQDYNPQVQS) the composition is skewed to polar residues. A compositionally biased stretch (basic residues) spans 167–184 (QHHHPHTRPPHHPPHPHF).

It localises to the nucleus. Functionally, acts in transcription regulation. May bind to a MEF2-like typee II promoter sequence. The polypeptide is MADS-box transcription factor pvg4 (pvg4) (Schizosaccharomyces pombe (strain 972 / ATCC 24843) (Fission yeast)).